Reading from the N-terminus, the 245-residue chain is tRNA pseudouridine synthase A (245 aa).

Asp52 acts as the Nucleophile in catalysis. A substrate-binding site is contributed by Tyr110.

The protein belongs to the tRNA pseudouridine synthase TruA family. Homodimer.

The enzyme catalyses uridine(38/39/40) in tRNA = pseudouridine(38/39/40) in tRNA. In terms of biological role, formation of pseudouridine at positions 38, 39 and 40 in the anticodon stem and loop of transfer RNAs. The protein is tRNA pseudouridine synthase A of Pseudothermotoga lettingae (strain ATCC BAA-301 / DSM 14385 / NBRC 107922 / TMO) (Thermotoga lettingae).